The following is a 196-amino-acid chain: Holliday junction branch migration complex subunit RuvA (196 aa).

Residues 1–64 (MIDRLRGQLV…EDAMLLFGFA (64 aa)) are domain I. The domain II stretch occupies residues 65–143 (TREEREAFDA…AAAGGGGGVA (79 aa)). Positions 144–153 (AGEGDGPFME) are flexible linker. The segment at 153 to 196 (EAREALTGLGYSLEEAERALRDVPPQETVEQYIKAALRKIGGRR) is domain III.

It belongs to the RuvA family. As to quaternary structure, homotetramer. Forms an RuvA(8)-RuvB(12)-Holliday junction (HJ) complex. HJ DNA is sandwiched between 2 RuvA tetramers; dsDNA enters through RuvA and exits via RuvB. An RuvB hexamer assembles on each DNA strand where it exits the tetramer. Each RuvB hexamer is contacted by two RuvA subunits (via domain III) on 2 adjacent RuvB subunits; this complex drives branch migration. In the full resolvosome a probable DNA-RuvA(4)-RuvB(12)-RuvC(2) complex forms which resolves the HJ.

It localises to the cytoplasm. In terms of biological role, the RuvA-RuvB-RuvC complex processes Holliday junction (HJ) DNA during genetic recombination and DNA repair, while the RuvA-RuvB complex plays an important role in the rescue of blocked DNA replication forks via replication fork reversal (RFR). RuvA specifically binds to HJ cruciform DNA, conferring on it an open structure. The RuvB hexamer acts as an ATP-dependent pump, pulling dsDNA into and through the RuvAB complex. HJ branch migration allows RuvC to scan DNA until it finds its consensus sequence, where it cleaves and resolves the cruciform DNA. In Rubrobacter xylanophilus (strain DSM 9941 / JCM 11954 / NBRC 16129 / PRD-1), this protein is Holliday junction branch migration complex subunit RuvA.